We begin with the raw amino-acid sequence, 109 residues long: Oncomodulin-1 (109 aa).

Ser-2 carries the N-acetylserine modification. EF-hand domains lie at 39–74 (MSAN…FESG) and 78–109 (LTES…MVHS). 10 residues coordinate Ca(2+): Asp-52, Asp-54, Ser-56, Tyr-58, Glu-63, Asp-91, Asp-93, Asp-95, Lys-97, and Glu-102.

It belongs to the parvalbumin family.

Has some calmodulin-like activity with respect to enzyme activation and growth regulation. Binds two calcium ions. In Homo sapiens (Human), this protein is Oncomodulin-1 (OCM).